Consider the following 407-residue polypeptide: Phosphopentomutase (407 aa).

Mn(2+) is bound by residues aspartate 10, aspartate 307, histidine 312, aspartate 348, histidine 349, and histidine 360.

The protein belongs to the phosphopentomutase family. The cofactor is Mn(2+).

The protein localises to the cytoplasm. The enzyme catalyses 2-deoxy-alpha-D-ribose 1-phosphate = 2-deoxy-D-ribose 5-phosphate. It carries out the reaction alpha-D-ribose 1-phosphate = D-ribose 5-phosphate. Its pathway is carbohydrate degradation; 2-deoxy-D-ribose 1-phosphate degradation; D-glyceraldehyde 3-phosphate and acetaldehyde from 2-deoxy-alpha-D-ribose 1-phosphate: step 1/2. Its function is as follows. Isomerase that catalyzes the conversion of deoxy-ribose 1-phosphate (dRib-1-P) and ribose 1-phosphate (Rib-1-P) to deoxy-ribose 5-phosphate (dRib-5-P) and ribose 5-phosphate (Rib-5-P), respectively. The chain is Phosphopentomutase from Methylobacterium nodulans (strain LMG 21967 / CNCM I-2342 / ORS 2060).